The following is a 283-amino-acid chain: uncharacterized protein (283 aa).

Asparagine 15 carries an N-linked (GlcNAc...) asparagine glycan. The 67-residue stretch at 15–81 (NATASTVFAI…QELNIALKVQ (67 aa)) folds into the PQ-loop 1 domain. 6 helical membrane-spanning segments follow: residues 19–39 (STVFAILGTVCWCVQLIPQII), 48–68 (EGLDTLFILSWVVASIPLSVY), 108–128 (ALFVVISFMLFSGGLQAMLIL), 138–158 (VEWPVVFMGVLATVLVNIGFL), 170–190 (VTGISYLFLAIDSSGSLFSFL), and 206–226 (GLLFIIEMGVFVLAFIFNVLL). The PQ-loop 2 domain maps to 149-204 (ATVLVNIGFLPQYISIFRARAVTGISYLFLAIDSSGSLFSFLSLPFDRWDVLAAVD). The N-linked (GlcNAc...) asparagine glycan is linked to asparagine 228.

Its subcellular location is the membrane. This is an uncharacterized protein from Schizosaccharomyces pombe (strain 972 / ATCC 24843) (Fission yeast).